We begin with the raw amino-acid sequence, 353 residues long: 3-dehydroquinate synthase (353 aa).

Belongs to the archaeal-type DHQ synthase family.

It catalyses the reaction 2-amino-2,3,7-trideoxy-D-lyxo-hept-6-ulosonate + NAD(+) + H2O = 3-dehydroquinate + NH4(+) + NADH + H(+). In terms of biological role, catalyzes the oxidative deamination and cyclization of 2-amino-3,7-dideoxy-D-threo-hept-6-ulosonic acid (ADH) to yield 3-dehydroquinate (DHQ), which is fed into the canonical shikimic pathway of aromatic amino acid biosynthesis. This chain is 3-dehydroquinate synthase, found in Nitrosopumilus maritimus (strain SCM1).